A 75-amino-acid chain; its full sequence is Putative sulfur carrier protein MJ0990 (75 aa).

Catalysis depends on C15, which acts as the Cysteine persulfide intermediate.

It belongs to the sulfur carrier protein TusA family.

This is Putative sulfur carrier protein MJ0990 from Methanocaldococcus jannaschii (strain ATCC 43067 / DSM 2661 / JAL-1 / JCM 10045 / NBRC 100440) (Methanococcus jannaschii).